A 1241-amino-acid polypeptide reads, in one-letter code: Dinoflagellate luciferase (1241 aa).

Luciferase stretches follow at residues 114 to 465 (KTGL…IKRD), 491 to 842 (DQGF…TKRD), and 868 to 1218 (EKGF…KKRD).

Belongs to the calycin superfamily. Luciferase family.

It localises to the cytoplasmic vesicle. The catalysed reaction is dinoflagellate luciferin + O2 = oxidized dinoflagellate luciferin + hnu + H2O + H(+). Its activity is regulated as follows. Regulated by pH: upon acidification, at a pH of 6.3, dinoflagellate luciferin is released from luciferin-binding protein LBP, allowing the interaction between Dinoflagellate luciferase and its substrate luciferin. Its function is as follows. Emits blue light flashes with a wavelength of 475 nm during the night phase. The chain is Dinoflagellate luciferase from Lingulodinium polyedra (Dinoflagellate).